A 247-amino-acid polypeptide reads, in one-letter code: Probable 2-phosphosulfolactate phosphatase (247 aa).

It belongs to the ComB family. It depends on Mg(2+) as a cofactor.

The enzyme catalyses (2R)-O-phospho-3-sulfolactate + H2O = (2R)-3-sulfolactate + phosphate. This chain is Probable 2-phosphosulfolactate phosphatase, found in Clostridium perfringens (strain SM101 / Type A).